A 150-amino-acid polypeptide reads, in one-letter code: Deoxyuridine 5'-triphosphate nucleotidohydrolase (150 aa).

Substrate is bound by residues 69–71 (RSG), Asn82, 86–88 (LID), and Lys96.

It belongs to the dUTPase family. Mg(2+) is required as a cofactor.

It carries out the reaction dUTP + H2O = dUMP + diphosphate + H(+). It participates in pyrimidine metabolism; dUMP biosynthesis; dUMP from dCTP (dUTP route): step 2/2. This enzyme is involved in nucleotide metabolism: it produces dUMP, the immediate precursor of thymidine nucleotides and it decreases the intracellular concentration of dUTP so that uracil cannot be incorporated into DNA. This Neisseria meningitidis serogroup A / serotype 4A (strain DSM 15465 / Z2491) protein is Deoxyuridine 5'-triphosphate nucleotidohydrolase.